Consider the following 404-residue polypeptide: Cysteine desulfurase IscS (404 aa).

Pyridoxal 5'-phosphate is bound by residues Ala-75–Thr-76, Asn-155, Gln-183, and Ser-203–His-205. Residue Lys-206 is modified to N6-(pyridoxal phosphate)lysine. Residue Thr-243 participates in pyridoxal 5'-phosphate binding. Catalysis depends on Cys-328, which acts as the Cysteine persulfide intermediate. Cys-328 is a [2Fe-2S] cluster binding site.

It belongs to the class-V pyridoxal-phosphate-dependent aminotransferase family. NifS/IscS subfamily. As to quaternary structure, homodimer. Forms a heterotetramer with IscU, interacts with other sulfur acceptors. Requires pyridoxal 5'-phosphate as cofactor.

The protein localises to the cytoplasm. It catalyses the reaction (sulfur carrier)-H + L-cysteine = (sulfur carrier)-SH + L-alanine. Its pathway is cofactor biosynthesis; iron-sulfur cluster biosynthesis. In terms of biological role, master enzyme that delivers sulfur to a number of partners involved in Fe-S cluster assembly, tRNA modification or cofactor biosynthesis. Catalyzes the removal of elemental sulfur and selenium atoms from cysteine and selenocysteine to produce alanine. Functions as a sulfur delivery protein for Fe-S cluster synthesis onto IscU, an Fe-S scaffold assembly protein, as well as other S acceptor proteins. Also functions as a selenium delivery protein in the pathway for the biosynthesis of selenophosphate. This chain is Cysteine desulfurase IscS, found in Salmonella gallinarum (strain 287/91 / NCTC 13346).